Reading from the N-terminus, the 357-residue chain is GDSL esterase/lipase At5g45950 (357 aa).

The N-terminal stretch at 1–23 (MLLVAFVTLLVAVALQPLPSVLS) is a signal peptide. The N-linked (GlcNAc...) asparagine glycan is linked to asparagine 37. Serine 47 acts as the Nucleophile in catalysis. A glycan (N-linked (GlcNAc...) asparagine) is linked at asparagine 132. Catalysis depends on residues aspartate 331 and histidine 334.

The protein belongs to the 'GDSL' lipolytic enzyme family.

It localises to the secreted. This Arabidopsis thaliana (Mouse-ear cress) protein is GDSL esterase/lipase At5g45950.